Consider the following 273-residue polypeptide: Glucosamine-6-phosphate deaminase (273 aa).

Aspartate 72 serves as the catalytic Proton acceptor; for enolization step. Aspartate 141 functions as the For ring-opening step in the catalytic mechanism. The active-site Proton acceptor; for ring-opening step is histidine 143. The active-site For ring-opening step is glutamate 148.

The protein belongs to the glucosamine/galactosamine-6-phosphate isomerase family. As to quaternary structure, homohexamer.

The protein resides in the cytoplasm. The enzyme catalyses alpha-D-glucosamine 6-phosphate + H2O = beta-D-fructose 6-phosphate + NH4(+). It participates in nucleotide-sugar biosynthesis; UDP-N-acetyl-alpha-D-glucosamine biosynthesis; alpha-D-glucosamine 6-phosphate from D-fructose 6-phosphate: step 1/1. Catalyzes the reversible conversion of alpha-D-glucosamine 6-phosphate (GlcN-6P) into beta-D-fructose 6-phosphate (Fru-6P) and ammonium ion, a regulatory reaction step in de novo uridine diphosphate-N-acetyl-alpha-D-glucosamine (UDP-GlcNAc) biosynthesis via hexosamine pathway. The sequence is that of Glucosamine-6-phosphate deaminase (Gnpda1) from Anopheles gambiae (African malaria mosquito).